A 482-amino-acid chain; its full sequence is Probable cytosol aminopeptidase (482 aa).

Mn(2+) is bound by residues lysine 251 and aspartate 256. Lysine 263 is a catalytic residue. The Mn(2+) site is built by aspartate 274, aspartate 333, and glutamate 335. Arginine 337 is a catalytic residue.

Belongs to the peptidase M17 family. The cofactor is Mn(2+).

It localises to the cytoplasm. It carries out the reaction Release of an N-terminal amino acid, Xaa-|-Yaa-, in which Xaa is preferably Leu, but may be other amino acids including Pro although not Arg or Lys, and Yaa may be Pro. Amino acid amides and methyl esters are also readily hydrolyzed, but rates on arylamides are exceedingly low.. The enzyme catalyses Release of an N-terminal amino acid, preferentially leucine, but not glutamic or aspartic acids.. Its function is as follows. Presumably involved in the processing and regular turnover of intracellular proteins. Catalyzes the removal of unsubstituted N-terminal amino acids from various peptides. The sequence is that of Probable cytosol aminopeptidase from Acinetobacter baumannii (strain SDF).